The chain runs to 497 residues: Serine/arginine-rich protein PSR (497 aa).

Residues 1 to 19 (MYSRCIALVFVGLLASSLA) form the signal peptide. Residues 20–366 (ANCYGPAGKL…HHGLSSQKLG (347 aa)) are Extracellular-facing. N-linked (GlcNAc...) asparagine glycans are attached at residues N92, N193, N202, N261, and N283. The chain crosses the membrane as a helical span at residues 367 to 387 (LAIGLPIAGVFLIILIAAAII). Topologically, residues 388-497 (YYRKRRESEK…ESASRDSDSD (110 aa)) are cytoplasmic. The necessary for phosphorylation by PSRPK in vitro stretch occupies residues 424–450 (MGSKTMQAMLDMRDDDESEHDSDDGYG). Over residues 436–447 (RDDDESEHDSDD) the composition is skewed to acidic residues. Residues 436-497 (RDDDESEHDS…ESASRDSDSD (62 aa)) are disordered. Positions 459 to 471 (GRSRSRSRSRSVS) are enriched in basic residues. Residues 476 to 497 (GSRDARSESDPGESASRDSDSD) show a composition bias toward basic and acidic residues.

Phosphorylated on serine residues in the RS domain by PSRPK.

The protein resides in the membrane. This chain is Serine/arginine-rich protein PSR, found in Physarum polycephalum (Slime mold).